A 296-amino-acid polypeptide reads, in one-letter code: Lipoyl synthase (296 aa).

The [4Fe-4S] cluster site is built by Cys37, Cys42, Cys48, Cys63, Cys67, Cys70, and Ser276. In terms of domain architecture, Radical SAM core spans 49–265; that stretch reads WSKKHATMMI…ERVARTKGFL (217 aa).

It belongs to the radical SAM superfamily. Lipoyl synthase family. [4Fe-4S] cluster is required as a cofactor.

It is found in the cytoplasm. The catalysed reaction is [[Fe-S] cluster scaffold protein carrying a second [4Fe-4S](2+) cluster] + N(6)-octanoyl-L-lysyl-[protein] + 2 oxidized [2Fe-2S]-[ferredoxin] + 2 S-adenosyl-L-methionine + 4 H(+) = [[Fe-S] cluster scaffold protein] + N(6)-[(R)-dihydrolipoyl]-L-lysyl-[protein] + 4 Fe(3+) + 2 hydrogen sulfide + 2 5'-deoxyadenosine + 2 L-methionine + 2 reduced [2Fe-2S]-[ferredoxin]. Its pathway is protein modification; protein lipoylation via endogenous pathway; protein N(6)-(lipoyl)lysine from octanoyl-[acyl-carrier-protein]: step 2/2. In terms of biological role, catalyzes the radical-mediated insertion of two sulfur atoms into the C-6 and C-8 positions of the octanoyl moiety bound to the lipoyl domains of lipoate-dependent enzymes, thereby converting the octanoylated domains into lipoylated derivatives. The chain is Lipoyl synthase from Rickettsia canadensis (strain McKiel).